The sequence spans 74 residues: Kappa-scoloptoxin(07)-Ssm2f (74 aa).

Positions 1 to 19 are cleaved as a signal peptide; it reads MLVFYAILFVTVFSNTVMG. Positions 20–41 are excised as a propeptide; sequence ATIDKPIPKPIFREAIEEMEVN.

Belongs to the scoloptoxin-07 family. Post-translationally, contains 3 disulfide bonds. As to expression, expressed by the venom gland.

The protein localises to the secreted. Functionally, inhibits voltage-gated potassium channels. The polypeptide is Kappa-scoloptoxin(07)-Ssm2f (Scolopendra mutilans (Chinese red-headed centipede)).